A 270-amino-acid chain; its full sequence is Formamidopyrimidine-DNA glycosylase (270 aa).

P2 serves as the catalytic Schiff-base intermediate with DNA. Residue E3 is the Proton donor of the active site. K58 (proton donor; for beta-elimination activity) is an active-site residue. Residues H91, R110, and R151 each contribute to the DNA site. Residues 236–270 (LVYGRDGLPCPNCGRALKHATIGQRASVWCSHCQR) form an FPG-type zinc finger. R260 acts as the Proton donor; for delta-elimination activity in catalysis.

The protein belongs to the FPG family. Monomer. Zn(2+) serves as cofactor.

The catalysed reaction is Hydrolysis of DNA containing ring-opened 7-methylguanine residues, releasing 2,6-diamino-4-hydroxy-5-(N-methyl)formamidopyrimidine.. It catalyses the reaction 2'-deoxyribonucleotide-(2'-deoxyribose 5'-phosphate)-2'-deoxyribonucleotide-DNA = a 3'-end 2'-deoxyribonucleotide-(2,3-dehydro-2,3-deoxyribose 5'-phosphate)-DNA + a 5'-end 5'-phospho-2'-deoxyribonucleoside-DNA + H(+). In terms of biological role, involved in base excision repair of DNA damaged by oxidation or by mutagenic agents. Acts as a DNA glycosylase that recognizes and removes damaged bases. Has a preference for oxidized purines, such as 7,8-dihydro-8-oxoguanine (8-oxoG). Has AP (apurinic/apyrimidinic) lyase activity and introduces nicks in the DNA strand. Cleaves the DNA backbone by beta-delta elimination to generate a single-strand break at the site of the removed base with both 3'- and 5'-phosphates. This chain is Formamidopyrimidine-DNA glycosylase, found in Stenotrophomonas maltophilia (strain K279a).